We begin with the raw amino-acid sequence, 3034 residues long: Cadherin EGF LAG seven-pass G-type receptor 1 (3034 aa).

Positions 1–29 (MAPSSPRVLPALVLLAAAALPALELGAAA) are cleaved as a signal peptide. The Extracellular portion of the chain corresponds to 30-2484 (WELRVPGGAR…REHGEVLPLK (2455 aa)). The span at 222 to 243 (GTPSESPSVSPSLLNLSQPRAG) shows a compositional bias: low complexity. A disordered region spans residues 222-267 (GTPSESPSVSPSLLNLSQPRAGVVRRSRRGTGSSTSPQFPLPSYQV). N236 carries N-linked (GlcNAc...) asparagine glycosylation. 9 consecutive Cadherin domains span residues 261-368 (PLPS…SPVF), 369-474 (EQSE…YPQF), 475-580 (SEKR…APIF), 581-702 (VSSP…DPMF), 703-804 (TQPV…RPVF), 805-907 (QSSH…APRF), 908-1014 (LRDF…PPVF), 1015-1116 (EKDE…PPEL), and 1121-1239 (ILFN…SPLL). Residues N561, N649, and N793 are each glycosylated (N-linked (GlcNAc...) asparagine). 6 N-linked (GlcNAc...) asparagine glycosylation sites follow: N1129, N1154, N1228, N1264, N1274, and N1302. The EGF-like 1; calcium-binding domain maps to 1318–1376 (DDNICLREPCENYMKCVSVLRFDSSAPFISSTTVLFRPIHPITGLRCRCPPGFTGDYCE). 9 cysteine pairs are disulfide-bonded: C1322–C1333, C1327–C1364, C1366–C1375, C1382–C1393, C1387–C1402, C1404–C1413, C1422–C1433, C1427–C1443, and C1445–C1455. In terms of domain architecture, EGF-like 2; calcium-binding spans 1378–1414 (EIDLCYSNPCGANGRCRSREGGYTCECFEDFTGEHCQ). The EGF-like 3; calcium-binding domain maps to 1418-1456 (RSGRCASGVCKNGGTCVNLLIGGFHCVCPPGEYEHPYCE). One can recognise a Laminin G-like 1 domain in the interval 1457–1661 (VSTRSFPPQS…IANNGTRAGC (205 aa)). N1591, N1638, and N1655 each carry an N-linked (GlcNAc...) asparagine glycan. Cystine bridges form between C1635–C1661, C1668–C1679, C1673–C1688, C1690–C1699, C1855–C1885, C1891–C1902, C1896–C1911, C1913–C1922, C1926–C1937, C1931–C1949, C1951–C1960, C1968–C1981, and C1983–C1993. The region spanning 1664–1700 (QRNFCDGTSCQNGGTCVNRWNTYLCECPLRFGGKNCE) is the EGF-like 4; calcium-binding domain. The residue at position 1681 (N1681) is a (3R)-3-hydroxyasparagine. Positions 1704-1885 (PHPQRFTGES…ALKVRVKDGC (182 aa)) constitute a Laminin G-like 2 domain. The EGF-like 5; calcium-binding domain maps to 1887–1922 (VEDPCASSPCPPHSHCRDTWDSYSCICDRGYFGKKC). D1904 is modified ((3R)-3-hydroxyaspartate). Positions 1923–1961 (VDACLLNPCKHVAACVRSPNTPRGYSCECGPGHYGQYCE) constitute an EGF-like 6; calcium-binding domain. The EGF-like 7; calcium-binding domain occupies 1962-1994 (NKVDLPCPKGWWGNPVCGPCHCAVSQGFDPDCN). Residue N1994 is glycosylated (N-linked (GlcNAc...) asparagine). One can recognise an EGF-like 8; calcium-binding domain in the interval 1996–2031 (TNGQCQCKENYYKPPAQDACLPCDCFPHGSHSRACD). Intrachain disulfides connect C2000/C2015, C2002/C2018, C2020/C2030, C2039/C2048, and C2051/C2063. Residues 2018 to 2065 (CDCFPHGSHSRACDMDTGQCACKPGVIGRQCNRCDNPFAEVTSLGCEV) enclose the Laminin EGF-like domain. 6 N-linked (GlcNAc...) asparagine glycosylation sites follow: N2118, N2137, N2144, N2155, N2160, and N2272. The tract at residues 2295–2346 (SVSFPADTFKPPEKKEGPVVRLTNRRTTPLTAQPEPRAERETSSSRRRRHPD) is disordered. Residues 2312–2476 (PVVRLTNRRT…AVLMDISRRE (165 aa)) form the GAIN-B domain. Intrachain disulfides connect C2426–C2458 and C2446–C2460. Residues 2426–2476 (CVFWNHSLDTGGTGGWSAKGCELLSRNRTHVTCQCSHSASCAVLMDISRRE) form a GPS region. N-linked (GlcNAc...) asparagine glycans are attached at residues N2430 and N2452. The helical transmembrane segment at 2485-2505 (IITYAALSLSLVALLVAFVLL) threads the bilayer. The Cytoplasmic portion of the chain corresponds to 2506–2516 (SLVRTLRSNLH). The chain crosses the membrane as a helical span at residues 2517 to 2537 (SIHKNLITALFFSQLIFMVGI). N-linked (GlcNAc...) asparagine glycosylation is present at N2538. The Extracellular portion of the chain corresponds to 2538-2542 (NQTEN). Residues 2543–2563 (PFLCTVVAILLHYVSMGTFAW) form a helical membrane-spanning segment. Residues 2564-2587 (TLVENLHVYRMLTEVRNIDTGPMR) are Cytoplasmic-facing. Residues 2588 to 2608 (FYHVVGWGIPAIVTGLAVGLD) form a helical membrane-spanning segment. The Extracellular segment spans residues 2609 to 2625 (PQGYGNPDFCWLSLQDT). Residues 2626 to 2646 (LIWSFAGPVGTVIIINTVIFV) form a helical membrane-spanning segment. Over 2647–2670 (LSAKVSCQRKHHYYERKGVVSMLR) the chain is Cytoplasmic. A helical transmembrane segment spans residues 2671-2691 (TAFLLLLLVTATWLLGLLAVN). Topologically, residues 2692-2694 (SDT) are extracellular. The helical transmembrane segment at 2695 to 2715 (LSFHYLFAAFSCLQGIFVLLF) threads the bilayer. Residues 2716–3034 (HCVAHREVRK…QANGSDSEKP (319 aa)) are Cytoplasmic-facing. The segment at 2774–3034 (TASLDSTTRD…QANGSDSEKP (261 aa)) is disordered. S2776, S2779, S2886, and S2888 each carry phosphoserine. Over residues 2893-2909 (TEPHLKVETKVSVELHR) the composition is skewed to basic and acidic residues. The span at 2976–2986 (SPTSSRTSSLG) shows a compositional bias: low complexity. A compositionally biased stretch (basic and acidic residues) spans 3003–3012 (PRREPGREHL). Polar residues predominate over residues 3020-3034 (RTGSAQANGSDSEKP).

The protein belongs to the G-protein coupled receptor 2 family. LN-TM7 subfamily. In terms of processing, the iron and 2-oxoglutarate dependent 3-hydroxylation of aspartate and asparagine is (R) stereospecific within EGF domains. In terms of tissue distribution, expressed in the brain, where it is localized principally in the ependymal cell layer, choroid plexus and the area postrema. Also found in spinal cord and in the eye.

It is found in the cell membrane. Receptor that may have an important role in cell/cell signaling during nervous system formation. The chain is Cadherin EGF LAG seven-pass G-type receptor 1 (Celsr1) from Mus musculus (Mouse).